The chain runs to 377 residues: Circumsporozoite protein (377 aa).

Residues 1 to 22 (MKNFILLAVSSILLVDLFPTHC) form the signal peptide. Residues 51–294 (HVGQSASRGR…NNEGANAPNE (244 aa)) are disordered. Basic and acidic residues predominate over residues 72-100 (DAKKKKDGKKAEPKNPRENKLKQPGDRAD). The required for the binding to heparan sulfate proteoglycans (HSPGs) on the surface of host hepatocytes stretch occupies residues 80-88 (KKAEPKNPR). Residues 91 to 95 (KLKQP) form a region I; contains the proteolytic cleavage site region. 20 consecutive repeat copies span residues 95-103 (PGDRADGQP), 104-112 (AGDRADGQP), 113-121 (AGDRADGQP), 122-130 (AGDRADGQP), 131-139 (AGDRAAGQP), 140-148 (AGDRADGQP), 149-157 (AGDRADGQP), 158-166 (AGDRADGQP), 167-175 (AGDRADGQP), 176-184 (AGDRAAGQP), 185-193 (AGDRAAGQP), 194-202 (AGDRADGQP), 203-211 (AGDRAAGQP), 212-220 (AGDRADGQP), 221-229 (AGDRAAGQP), 230-238 (AGDRADGQP), 239-247 (AGDRAAGQP), 248-256 (AGDRAAGQP), 257-265 (AGDRAAGQA), and 266-274 (AGDRAAGQA). A 20 X 9 AA tandem repeats of [PA]-G-D-R-A-[DA]-G-Q-[PA] region spans residues 95–274 (PGDRADGQPA…AAGDRAAGQA (180 aa)). The segment covering 236 to 273 (GQPAGDRAAGQPAGDRAAGQPAGDRAAGQAAGDRAAGQ) has biased composition (low complexity). Residues 274–283 (AAGGNAGGQG) show a composition bias toward gly residues. Residues 284–293 (QNNEGANAPN) show a composition bias toward low complexity. Positions 303–355 (KVRATVGTEWTPCSVTCGVGVRVRRRVNAANKKPEDLTLNDLETDVCTMDKCA) constitute a TSP type-1 domain. Disulfide bonds link C315–C349 and C319–C354. O-linked (Fuc) threonine glycosylation is present at T318. Residue C354 is the site of GPI-anchor amidated cysteine attachment. Positions 355–377 (AGIFNVVSNSLGLVILLVLALFN) are cleaved as a propeptide — removed in mature form.

Belongs to the plasmodium circumsporozoite protein family. During host cell invasion, proteolytically cleaved at the cell membrane in the region I by a papain-like cysteine protease of parasite origin. Cleavage is triggered by the sporozoite contact with highly sulfated heparan sulfate proteoglycans (HSPGs) present on the host hepatocyte cell surface. Cleavage exposes the TSP type-1 (TSR) domain and is required for productive invasion of host hepatocytes but not for adhesion to the host cell membrane. Cleavage is dispensable for sporozoite development in the oocyst, motility and for traversal of host and vector cells. Post-translationally, O-glycosylated; maybe by POFUT2.

The protein resides in the cell membrane. The protein localises to the cytoplasm. Its function is as follows. Essential sporozoite protein. In the mosquito vector, required for sporozoite development in the oocyst, migration through the vector hemolymph and entry into the vector salivary glands. In the vertebrate host, required for sporozoite migration through the host dermis and infection of host hepatocytes. Binds to highly sulfated heparan sulfate proteoglycans (HSPGs) on the surface of host hepatocytes. In the vertebrate host, binds to highly sulfated heparan sulfate proteoglycans (HSPGs) on the surface of host hepatocytes and is required for sporozoite invasion of the host hepatocytes. The polypeptide is Circumsporozoite protein (Plasmodium vivax (strain Salvador I)).